Reading from the N-terminus, the 311-residue chain is HPr kinase/phosphorylase (311 aa).

Residues histidine 139 and lysine 160 contribute to the active site. 154-161 (GESGVGKS) provides a ligand contact to ATP. Serine 161 serves as a coordination point for Mg(2+). Residue aspartate 178 is the Proton acceptor; for phosphorylation activity. Proton donor; for dephosphorylation activity of the active site. Residues 202–211 (IEIRGIGILD) are important for the catalytic mechanism of both phosphorylation and dephosphorylation. A Mg(2+)-binding site is contributed by glutamate 203. The active site involves arginine 244. The segment at 265–270 (PVRPGR) is important for the catalytic mechanism of dephosphorylation.

Belongs to the HPrK/P family. In terms of assembly, homohexamer. The cofactor is Mg(2+).

The catalysed reaction is [HPr protein]-L-serine + ATP = [HPr protein]-O-phospho-L-serine + ADP + H(+). It carries out the reaction [HPr protein]-O-phospho-L-serine + phosphate + H(+) = [HPr protein]-L-serine + diphosphate. Its function is as follows. Catalyzes the ATP- as well as the pyrophosphate-dependent phosphorylation of a specific serine residue in HPr, a phosphocarrier protein of the phosphoenolpyruvate-dependent sugar phosphotransferase system (PTS). HprK/P also catalyzes the pyrophosphate-producing, inorganic phosphate-dependent dephosphorylation (phosphorolysis) of seryl-phosphorylated HPr (P-Ser-HPr). The two antagonistic activities of HprK/P are regulated by several intracellular metabolites, which change their concentration in response to the absence or presence of rapidly metabolisable carbon sources (glucose, fructose, etc.) in the growth medium. Therefore, by controlling the phosphorylation state of HPr, HPrK/P is a sensor enzyme that plays a major role in the regulation of carbon metabolism and sugar transport: it mediates carbon catabolite repression (CCR), and regulates PTS-catalyzed carbohydrate uptake and inducer exclusion. In Caldicellulosiruptor bescii (strain ATCC BAA-1888 / DSM 6725 / KCTC 15123 / Z-1320) (Anaerocellum thermophilum), this protein is HPr kinase/phosphorylase.